The primary structure comprises 96 residues: Large ribosomal subunit protein uL23 (96 aa).

It belongs to the universal ribosomal protein uL23 family. Part of the 50S ribosomal subunit. Contacts protein L29, and trigger factor when it is bound to the ribosome.

Functionally, one of the early assembly proteins it binds 23S rRNA. One of the proteins that surrounds the polypeptide exit tunnel on the outside of the ribosome. Forms the main docking site for trigger factor binding to the ribosome. This chain is Large ribosomal subunit protein uL23, found in Maridesulfovibrio salexigens (strain ATCC 14822 / DSM 2638 / NCIMB 8403 / VKM B-1763) (Desulfovibrio salexigens).